A 183-amino-acid chain; its full sequence is Nucleosome assembly protein 1-like 5 (183 aa).

The interval 1–71 is disordered; that stretch reads MADSENQGPA…APKPKNDFIE (71 aa). 2 stretches are compositionally biased toward low complexity: residues 7 to 21 and 28 to 49; these read QGPAEPSQAAAAAEA and AEGGAQGGDCDSAAGDPDSAAG. A coiled-coil region spans residues 81-107; sequence VLALKKLQKRCDKIEAKFDKEFQALEK. The span at 135 to 161 shows a compositional bias: acidic residues; the sequence is EGEEEEEEEYEDDEEEGEEEEEEEEAA. The tract at residues 135–183 is disordered; the sequence is EGEEEEEEEYEDDEEEGEEEEEEEEAAAEAAAGAKHDDAHAEMPDDAKK. The segment covering 168–183 has biased composition (basic and acidic residues); the sequence is AKHDDAHAEMPDDAKK.

This sequence belongs to the nucleosome assembly protein (NAP) family.

Its subcellular location is the nucleus. This Pongo abelii (Sumatran orangutan) protein is Nucleosome assembly protein 1-like 5 (NAP1L5).